Consider the following 231-residue polypeptide: Ribose-5-phosphate isomerase A (231 aa).

Residues 32–35, 85–88, and 98–101 contribute to the substrate site; these read TGST, DGAD, and KGGG. The active-site Proton acceptor is E107. K125 is a substrate binding site.

It belongs to the ribose 5-phosphate isomerase family. In terms of assembly, homodimer.

It carries out the reaction aldehydo-D-ribose 5-phosphate = D-ribulose 5-phosphate. Its pathway is carbohydrate degradation; pentose phosphate pathway; D-ribose 5-phosphate from D-ribulose 5-phosphate (non-oxidative stage): step 1/1. Functionally, catalyzes the reversible conversion of ribose-5-phosphate to ribulose 5-phosphate. This chain is Ribose-5-phosphate isomerase A, found in Paraburkholderia xenovorans (strain LB400).